The following is a 363-amino-acid chain: 3-isopropylmalate dehydrogenase (363 aa).

NAD(+) is bound at residue 78–91 (GKKWDYLPIESRPE). 4 residues coordinate substrate: Arg99, Arg109, Arg138, and Asp227. The Mg(2+) site is built by Asp227, Asp251, and Asp255. 285–297 (GSAPDIEGKNIAN) is an NAD(+) binding site.

The protein belongs to the isocitrate and isopropylmalate dehydrogenases family. LeuB type 1 subfamily. As to quaternary structure, homodimer. Mg(2+) is required as a cofactor. Mn(2+) serves as cofactor.

It localises to the cytoplasm. The catalysed reaction is (2R,3S)-3-isopropylmalate + NAD(+) = 4-methyl-2-oxopentanoate + CO2 + NADH. It functions in the pathway amino-acid biosynthesis; L-leucine biosynthesis; L-leucine from 3-methyl-2-oxobutanoate: step 3/4. In terms of biological role, catalyzes the oxidation of 3-carboxy-2-hydroxy-4-methylpentanoate (3-isopropylmalate) to 3-carboxy-4-methyl-2-oxopentanoate. The product decarboxylates to 4-methyl-2 oxopentanoate. This is 3-isopropylmalate dehydrogenase from Buchnera aphidicola subsp. Schizaphis graminum (strain Sg).